A 209-amino-acid polypeptide reads, in one-letter code: Uridine kinase (209 aa).

12-19 (GGSASGKT) contacts ATP.

The protein belongs to the uridine kinase family.

It is found in the cytoplasm. The enzyme catalyses uridine + ATP = UMP + ADP + H(+). The catalysed reaction is cytidine + ATP = CMP + ADP + H(+). It participates in pyrimidine metabolism; CTP biosynthesis via salvage pathway; CTP from cytidine: step 1/3. It functions in the pathway pyrimidine metabolism; UMP biosynthesis via salvage pathway; UMP from uridine: step 1/1. This Chloroflexus aurantiacus (strain ATCC 29366 / DSM 635 / J-10-fl) protein is Uridine kinase.